The sequence spans 213 residues: LexA repressor (213 aa).

The segment at residues 29-49 (VREICNAVGFKSTSTVHSYLE) is a DNA-binding region (H-T-H motif). Catalysis depends on for autocatalytic cleavage activity residues S136 and K173.

It belongs to the peptidase S24 family. Homodimer.

It catalyses the reaction Hydrolysis of Ala-|-Gly bond in repressor LexA.. Functionally, represses a number of genes involved in the response to DNA damage (SOS response), including recA and lexA. In the presence of single-stranded DNA, RecA interacts with LexA causing an autocatalytic cleavage which disrupts the DNA-binding part of LexA, leading to derepression of the SOS regulon and eventually DNA repair. This is LexA repressor from Acetivibrio thermocellus (strain ATCC 27405 / DSM 1237 / JCM 9322 / NBRC 103400 / NCIMB 10682 / NRRL B-4536 / VPI 7372) (Clostridium thermocellum).